The chain runs to 319 residues: tRNA-modifying protein YgfZ (319 aa).

Positions 27 and 189 each coordinate folate.

It belongs to the tRNA-modifying YgfZ family.

It is found in the cytoplasm. Its function is as follows. Folate-binding protein involved in regulating the level of ATP-DnaA and in the modification of some tRNAs. It is probably a key factor in regulatory networks that act via tRNA modification, such as initiation of chromosomal replication. The chain is tRNA-modifying protein YgfZ from Buchnera aphidicola subsp. Schizaphis graminum (strain Sg).